The sequence spans 342 residues: Probable endoglucanase (342 aa).

The first 20 residues, 1–20, serve as a signal peptide directing secretion; sequence MSVMAAMGGAQVLSSTGAFA. The active-site Proton donor is Glu-57. The active-site Nucleophile is Asp-114.

This sequence belongs to the glycosyl hydrolase 8 (cellulase D) family.

It is found in the secreted. It catalyses the reaction Endohydrolysis of (1-&gt;4)-beta-D-glucosidic linkages in cellulose, lichenin and cereal beta-D-glucans.. Functionally, enzyme capable of hydrolyzing carboxy-methyl-cellulose (CMC). This chain is Probable endoglucanase (cmcAX), found in Novacetimonas hansenii (Komagataeibacter hansenii).